The chain runs to 367 residues: Alginate lyase (367 aa).

The N-terminal stretch at 1 to 27 (MKTSHLIRIALPGALAAALLASQVSQA) is a signal peptide. Substrate-binding positions include 65-66 (SK), 138-139 (HT), and Tyr256.

Belongs to the polysaccharide lyase 5 family.

The protein localises to the periplasm. The enzyme catalyses Eliminative cleavage of alginate to give oligosaccharides with 4-deoxy-alpha-L-erythro-hex-4-enuronosyl groups at their non-reducing ends and beta-D-mannuronate at their reducing end.. Its function is as follows. Catalyzes the depolymerization of alginate by cleaving the beta-1,4 glycosidic bond between two adjacent sugar residues via a beta-elimination mechanism. May serve to degrade mislocalized alginate that is trapped in the periplasmic space. Acts preferentially on non-acetylated alginate or its precursor mannuronan. Is able to catalyze cleavage adjacent to either mannuronate or guluronate residues in alginate. Exhaustive digestion of alginate by AlgL generates dimeric and trimeric products. In addition to its enzymatic function, AlgL appears to be required for alginate export, maybe as part of a multi-protein alginate-secretion complex. In Pseudomonas aeruginosa (strain ATCC 15692 / DSM 22644 / CIP 104116 / JCM 14847 / LMG 12228 / 1C / PRS 101 / PAO1), this protein is Alginate lyase.